The sequence spans 182 residues: Large ribosomal subunit protein uL6 (182 aa).

It belongs to the universal ribosomal protein uL6 family. In terms of assembly, part of the 50S ribosomal subunit.

This protein binds to the 23S rRNA, and is important in its secondary structure. It is located near the subunit interface in the base of the L7/L12 stalk, and near the tRNA binding site of the peptidyltransferase center. This chain is Large ribosomal subunit protein uL6, found in Methanococcus maripaludis (strain C7 / ATCC BAA-1331).